Here is a 102-residue protein sequence, read N- to C-terminus: MSRRCELTAKGPLVGHKVSHSNIKTKRRFLPNLVNVTFISEALERNVRLRVSTNAVKSVDHNGGLDAFLLKASADALSPRALELKRAIQKKVGVTAPVKKAS.

This sequence belongs to the bacterial ribosomal protein bL28 family.

This chain is Large ribosomal subunit protein bL28, found in Bradyrhizobium diazoefficiens (strain JCM 10833 / BCRC 13528 / IAM 13628 / NBRC 14792 / USDA 110).